Here is a 262-residue protein sequence, read N- to C-terminus: Thiazole synthase (262 aa).

Catalysis depends on lysine 105, which acts as the Schiff-base intermediate with DXP. Residues glycine 166, 192–193 (AG), and 214–215 (NT) each bind 1-deoxy-D-xylulose 5-phosphate.

Belongs to the ThiG family. In terms of assembly, homotetramer. Forms heterodimers with either ThiH or ThiS.

The protein localises to the cytoplasm. The catalysed reaction is [ThiS sulfur-carrier protein]-C-terminal-Gly-aminoethanethioate + 2-iminoacetate + 1-deoxy-D-xylulose 5-phosphate = [ThiS sulfur-carrier protein]-C-terminal Gly-Gly + 2-[(2R,5Z)-2-carboxy-4-methylthiazol-5(2H)-ylidene]ethyl phosphate + 2 H2O + H(+). Its pathway is cofactor biosynthesis; thiamine diphosphate biosynthesis. Its function is as follows. Catalyzes the rearrangement of 1-deoxy-D-xylulose 5-phosphate (DXP) to produce the thiazole phosphate moiety of thiamine. Sulfur is provided by the thiocarboxylate moiety of the carrier protein ThiS. In vitro, sulfur can be provided by H(2)S. This is Thiazole synthase from Phenylobacterium zucineum (strain HLK1).